The sequence spans 555 residues: Membrane protein insertase YidC (555 aa).

5 helical membrane passes run 7-24 (VLWV…DNWQ), 367-387 (WGWS…PLSA), 437-457 (LPVV…LASV), 476-496 (PFFI…SLNP), and 511-531 (PIAF…YYVV).

It belongs to the OXA1/ALB3/YidC family. Type 1 subfamily. In terms of assembly, interacts with the Sec translocase complex via SecD. Specifically interacts with transmembrane segments of nascent integral membrane proteins during membrane integration.

The protein resides in the cell inner membrane. Functionally, required for the insertion and/or proper folding and/or complex formation of integral membrane proteins into the membrane. Involved in integration of membrane proteins that insert both dependently and independently of the Sec translocase complex, as well as at least some lipoproteins. Aids folding of multispanning membrane proteins. The sequence is that of Membrane protein insertase YidC from Burkholderia lata (strain ATCC 17760 / DSM 23089 / LMG 22485 / NCIMB 9086 / R18194 / 383).